Here is a 473-residue protein sequence, read N- to C-terminus: MKILYSPRRFYPVETLFNGTLSLGGRDQETTGFAWWAGNARLINLSGKLLGAHVAHAGLIVFWAGAMNLFEVAHFVSEKPMYEQGLILLPHLATLGWGVGPGGEVADTFPYFVSGVLHLISSAVLGFGGIYHALIGPETLEESFPFFGYTWKDKNKMTTILGIHLILLGFGAFLLVFKALYFGGLYDTWAPGGGDVREITNLTLNPNIIFGYLLKSPFGGEGWIASVDNLEDIIGGHVWLGSICIFGGIWHILTKPFAWARRAFVWSGEAYLSYSLGALAIFGFTACCFVWFNNTAYPSEFYGPTGPEASQAQAFTFLVRDQRLGANIGSAQGPTGLGKYLMRSPTGEIIFGGETMRFWDLRAPWLEPLRGPNGLDLGKLKRDIQPWQERRSAEYMTHAPLGSLNSVGGVATEINAVNYVSPRSWLATSHFVLGFFFFVGHLWHAGRARAAAAGFEKGIDRDTEPVLSMTPLN.

Positions 1-14 are excised as a propeptide; that stretch reads MKILYSPRRFYPVE. N-acetylthreonine is present on threonine 15. Residue threonine 15 is modified to Phosphothreonine. A run of 5 helical transmembrane segments spans residues 69 to 93, 134 to 155, 178 to 200, 255 to 275, and 291 to 312; these read LFEVAHFVSEKPMYEQGLILLPHLA, LIGPETLEESFPFFGYTWKDKN, KALYFGGLYDTWAPGGGDVREIT, KPFAWARRAFVWSGEAYLSYS, and WFNNTAYPSEFYGPTGPEASQA. [CaMn4O5] cluster is bound at residue glutamate 367. The helical transmembrane segment at 447 to 471 threads the bilayer; that stretch reads RARAAAAGFEKGIDRDTEPVLSMTP.

Belongs to the PsbB/PsbC family. PsbC subfamily. In terms of assembly, PSII is composed of 1 copy each of membrane proteins PsbA, PsbB, PsbC, PsbD, PsbE, PsbF, PsbH, PsbI, PsbJ, PsbK, PsbL, PsbM, PsbT, PsbX, PsbY, PsbZ, Psb30/Ycf12, at least 3 peripheral proteins of the oxygen-evolving complex and a large number of cofactors. It forms dimeric complexes. It depends on Binds multiple chlorophylls and provides some of the ligands for the Ca-4Mn-5O cluster of the oxygen-evolving complex. It may also provide a ligand for a Cl- that is required for oxygen evolution. PSII binds additional chlorophylls, carotenoids and specific lipids. as a cofactor.

The protein localises to the plastid. It localises to the chloroplast thylakoid membrane. Its function is as follows. One of the components of the core complex of photosystem II (PSII). It binds chlorophyll and helps catalyze the primary light-induced photochemical processes of PSII. PSII is a light-driven water:plastoquinone oxidoreductase, using light energy to abstract electrons from H(2)O, generating O(2) and a proton gradient subsequently used for ATP formation. The sequence is that of Photosystem II CP43 reaction center protein from Adiantum capillus-veneris (Maidenhair fern).